A 477-amino-acid chain; its full sequence is Cyclin-A1-2 (477 aa).

It belongs to the cyclin family. Cyclin AB subfamily.

The protein is Cyclin-A1-2 (CYCA1-2) of Oryza sativa subsp. japonica (Rice).